The following is a 182-amino-acid chain: Oligoribonuclease (182 aa).

One can recognise an Exonuclease domain in the interval 8–171 (LIWLDMEMTG…ADIHESIGEL (164 aa)). Tyr-129 is an active-site residue.

The protein belongs to the oligoribonuclease family.

It is found in the cytoplasm. 3'-to-5' exoribonuclease specific for small oligoribonucleotides. This is Oligoribonuclease from Azoarcus sp. (strain BH72).